We begin with the raw amino-acid sequence, 288 residues long: MAAHILSGRPVVESLHARIQQVLARRAPHQGPPTLTVLLPNDPSAQAYARAIRKQFTTLSLNYRTEEIDDTLDESRFAILLKRLAEDESVTGILALQPLPKGVSRRSLARLMPPTKDVDGVSFEQQGRLAIGSPWIAPSTPLGGLILLQHYGIEVAGRHAVVIGRSPVVGRPLALLLLARDATVTICHRRTPDLAKLTRQADLLFVAAGQPHLVKPDMVAPGAVVIDFGVSVRDGRLIGDVDPAVAEVASALTPVPGGTGPVTTAVLALNLLRLAGLLEENDLFPGAP.

NADP(+) is bound by residues 164-166 (GRS) and valine 230.

Belongs to the tetrahydrofolate dehydrogenase/cyclohydrolase family. As to quaternary structure, homodimer.

It catalyses the reaction (6R)-5,10-methylene-5,6,7,8-tetrahydrofolate + NADP(+) = (6R)-5,10-methenyltetrahydrofolate + NADPH. It carries out the reaction (6R)-5,10-methenyltetrahydrofolate + H2O = (6R)-10-formyltetrahydrofolate + H(+). The protein operates within one-carbon metabolism; tetrahydrofolate interconversion. Functionally, catalyzes the oxidation of 5,10-methylenetetrahydrofolate to 5,10-methenyltetrahydrofolate and then the hydrolysis of 5,10-methenyltetrahydrofolate to 10-formyltetrahydrofolate. In Thermomicrobium roseum (strain ATCC 27502 / DSM 5159 / P-2), this protein is Bifunctional protein FolD.